The sequence spans 154 residues: Protein phosphatase 1 regulatory subunit 27 (154 aa).

ANK repeat units follow at residues 63–92 (SGLA…DIHQ) and 96–125 (AGWT…DRDA).

In terms of assembly, interacts with DYSF and PPP1CA.

Functionally, inhibits phosphatase activity of protein phosphatase 1 (PP1) complexes. This chain is Protein phosphatase 1 regulatory subunit 27 (PPP1R27), found in Homo sapiens (Human).